Here is a 63-residue protein sequence, read N- to C-terminus: DNA gyrase inhibitor YacG (63 aa).

Cysteine 9, cysteine 12, cysteine 28, and cysteine 32 together coordinate Zn(2+).

Belongs to the DNA gyrase inhibitor YacG family. As to quaternary structure, interacts with GyrB. It depends on Zn(2+) as a cofactor.

Inhibits all the catalytic activities of DNA gyrase by preventing its interaction with DNA. Acts by binding directly to the C-terminal domain of GyrB, which probably disrupts DNA binding by the gyrase. In Salmonella choleraesuis (strain SC-B67), this protein is DNA gyrase inhibitor YacG.